A 98-amino-acid polypeptide reads, in one-letter code: Co-chaperonin GroES (98 aa).

The protein belongs to the GroES chaperonin family. Heptamer of 7 subunits arranged in a ring. Interacts with the chaperonin GroEL.

The protein resides in the cytoplasm. In terms of biological role, together with the chaperonin GroEL, plays an essential role in assisting protein folding. The GroEL-GroES system forms a nano-cage that allows encapsulation of the non-native substrate proteins and provides a physical environment optimized to promote and accelerate protein folding. GroES binds to the apical surface of the GroEL ring, thereby capping the opening of the GroEL channel. This Corynebacterium diphtheriae (strain ATCC 700971 / NCTC 13129 / Biotype gravis) protein is Co-chaperonin GroES.